Reading from the N-terminus, the 1116-residue chain is DNA-directed RNA polymerase subunit beta (1116 aa).

The span at 1070–1100 (KIREEEKEREKEREAREMEDPEKIVSKIDAK) shows a compositional bias: basic and acidic residues. Positions 1070 to 1116 (KIREEEKEREKEREAREMEDPEKIVSKIDAKQKKKYKKTKKQTEKKK) are disordered. Positions 1101 to 1116 (QKKKYKKTKKQTEKKK) are enriched in basic residues.

It belongs to the RNA polymerase beta chain family. As to quaternary structure, in plastids the minimal PEP RNA polymerase catalytic core is composed of four subunits: alpha, beta, beta', and beta''. When a (nuclear-encoded) sigma factor is associated with the core the holoenzyme is formed, which can initiate transcription.

The protein resides in the plastid. Its subcellular location is the chloroplast. The enzyme catalyses RNA(n) + a ribonucleoside 5'-triphosphate = RNA(n+1) + diphosphate. DNA-dependent RNA polymerase catalyzes the transcription of DNA into RNA using the four ribonucleoside triphosphates as substrates. The polypeptide is DNA-directed RNA polymerase subunit beta (Heterosigma akashiwo (Chromophytic alga)).